A 211-amino-acid polypeptide reads, in one-letter code: Dual specificity protein phosphatase 26 (211 aa).

In terms of domain architecture, Tyrosine-protein phosphatase spans 60–207 (NHADEVWPGL…LLALDRRLRQ (148 aa)). The active-site Phosphocysteine intermediate is the Cys152.

It belongs to the protein-tyrosine phosphatase family. Non-receptor class dual specificity subfamily. As to quaternary structure, interacts with HSF4. Brain and skeletal muscle. In the brain it is expressed ubiquitously except in the hippocampus.

The protein localises to the cytoplasm. It is found in the nucleus. Its subcellular location is the golgi apparatus. It carries out the reaction O-phospho-L-tyrosyl-[protein] + H2O = L-tyrosyl-[protein] + phosphate. The enzyme catalyses O-phospho-L-seryl-[protein] + H2O = L-seryl-[protein] + phosphate. It catalyses the reaction O-phospho-L-threonyl-[protein] + H2O = L-threonyl-[protein] + phosphate. Its function is as follows. Inactivates MAPK1 and MAPK3 which leads to dephosphorylation of heat shock factor protein 4 and a reduction in its DNA-binding activity. This Mus musculus (Mouse) protein is Dual specificity protein phosphatase 26 (Dusp26).